A 439-amino-acid polypeptide reads, in one-letter code: MAFTVKDILSIQVAPALGCTEPAAVALCAAAAASLLPEKASIEALEVRVDPNIFKNGLAVLIPGTEGLSGLDMAAALGAIGGNPAKSLEVLGEVNPEHVKQAQALIKDGKIRLNLLADHKGLFIKVIVNAGENMAEAVVESMHDNITRMALDGVPVEKSSLIAPKESSKNARAAELESWLKGLGLKHLMDLLDDLDDEDLAFLEEGLDANMKLADYGLKHGPGLGVGKTLDRLMRQRLIARDMILDARILASAAADARMAGVNLPAMSSAGSGNHGLTAILPIKAVHKYLESDHESMLRAIGLSHIVTAFVKAFTGRLSAVCGCSVAAGAGATAGVTYLMGGNANHIADAIKNLMEDLAGIICDGAKSGCAFKLSTAAGTAVQAALFALQGVKVMETDGIIGASLEKTTQNLGALSTEGMIETDRTILKIMLEKQFSPD.

Belongs to the UPF0597 family.

The polypeptide is UPF0597 protein Dalk_4447 (Desulfatibacillum aliphaticivorans).